The chain runs to 117 residues: Ribosome-binding factor A (117 aa).

This sequence belongs to the RbfA family. As to quaternary structure, monomer. Binds 30S ribosomal subunits, but not 50S ribosomal subunits or 70S ribosomes.

It is found in the cytoplasm. One of several proteins that assist in the late maturation steps of the functional core of the 30S ribosomal subunit. Associates with free 30S ribosomal subunits (but not with 30S subunits that are part of 70S ribosomes or polysomes). Required for efficient processing of 16S rRNA. May interact with the 5'-terminal helix region of 16S rRNA. In Blochmanniella floridana, this protein is Ribosome-binding factor A.